A 486-amino-acid polypeptide reads, in one-letter code: UDP-N-acetylmuramoyl-L-alanyl-D-glutamate--2,6-diaminopimelate ligase (486 aa).

UDP-N-acetyl-alpha-D-muramoyl-L-alanyl-D-glutamate is bound at residue Ser-30. 111–117 (GTNGKTT) lines the ATP pocket. Residues 153–154 (TT), Ser-180, Gln-186, and Arg-188 contribute to the UDP-N-acetyl-alpha-D-muramoyl-L-alanyl-D-glutamate site. An N6-carboxylysine modification is found at Lys-220. Meso-2,6-diaminopimelate is bound by residues Arg-378, 402-405 (DNPR), Gly-455, and Glu-459. Residues 402-405 (DNPR) carry the Meso-diaminopimelate recognition motif motif.

Belongs to the MurCDEF family. MurE subfamily. The cofactor is Mg(2+). Post-translationally, carboxylation is probably crucial for Mg(2+) binding and, consequently, for the gamma-phosphate positioning of ATP.

It is found in the cytoplasm. It catalyses the reaction UDP-N-acetyl-alpha-D-muramoyl-L-alanyl-D-glutamate + meso-2,6-diaminopimelate + ATP = UDP-N-acetyl-alpha-D-muramoyl-L-alanyl-gamma-D-glutamyl-meso-2,6-diaminopimelate + ADP + phosphate + H(+). It participates in cell wall biogenesis; peptidoglycan biosynthesis. Catalyzes the addition of meso-diaminopimelic acid to the nucleotide precursor UDP-N-acetylmuramoyl-L-alanyl-D-glutamate (UMAG) in the biosynthesis of bacterial cell-wall peptidoglycan. The sequence is that of UDP-N-acetylmuramoyl-L-alanyl-D-glutamate--2,6-diaminopimelate ligase from Parabacteroides distasonis (strain ATCC 8503 / DSM 20701 / CIP 104284 / JCM 5825 / NCTC 11152).